The sequence spans 486 residues: Glutamyl-tRNA(Gln) amidotransferase subunit A (486 aa).

Active-site charge relay system residues include Lys79 and Ser154. Residue Ser178 is the Acyl-ester intermediate of the active site.

It belongs to the amidase family. GatA subfamily. Heterotrimer of A, B and C subunits.

It carries out the reaction L-glutamyl-tRNA(Gln) + L-glutamine + ATP + H2O = L-glutaminyl-tRNA(Gln) + L-glutamate + ADP + phosphate + H(+). Its function is as follows. Allows the formation of correctly charged Gln-tRNA(Gln) through the transamidation of misacylated Glu-tRNA(Gln) in organisms which lack glutaminyl-tRNA synthetase. The reaction takes place in the presence of glutamine and ATP through an activated gamma-phospho-Glu-tRNA(Gln). The polypeptide is Glutamyl-tRNA(Gln) amidotransferase subunit A (Myxococcus xanthus (strain DK1622)).